We begin with the raw amino-acid sequence, 647 residues long: UvrABC system protein C (647 aa).

Positions 16–95 (VEPGVYRFRD…IKEFDPRFNI (80 aa)) constitute a GIY-YIG domain. Positions 208-243 (DRYARDLERKMSAAAEQLDFERAARLRDDLFALKRA) constitute a UVR domain.

It belongs to the UvrC family. In terms of assembly, interacts with UvrB in an incision complex.

The protein resides in the cytoplasm. The UvrABC repair system catalyzes the recognition and processing of DNA lesions. UvrC both incises the 5' and 3' sides of the lesion. The N-terminal half is responsible for the 3' incision and the C-terminal half is responsible for the 5' incision. The polypeptide is UvrABC system protein C (Mycobacterium leprae (strain Br4923)).